Reading from the N-terminus, the 488-residue chain is Sterol 14-demethylase (488 aa).

Residues 12-32 (TGLVIVATLVIAKLIFSFFTS) form a helical membrane-spanning segment. A heme-binding site is contributed by C433.

It belongs to the cytochrome P450 family. It depends on heme as a cofactor. Expressed in leaves, roots, stems, siliques, flowers, flower buds and seedlings.

It is found in the membrane. The catalysed reaction is a 14alpha-methyl steroid + 3 reduced [NADPH--hemoprotein reductase] + 3 O2 = a Delta(14) steroid + formate + 3 oxidized [NADPH--hemoprotein reductase] + 4 H2O + 4 H(+). Functionally, involved in sterol biosynthesis. Catalyzes the 14-alpha demethylation of obtusifoliol to 4 alpha-methyl-5 alpha-ergosta-8,14,24(28)-trien-3 beta-ol. The protein is Sterol 14-demethylase (CYP51G1) of Arabidopsis thaliana (Mouse-ear cress).